The following is a 134-amino-acid chain: UPF0412 protein YaaI (134 aa).

An N-terminal signal peptide occupies residues 1–23 (MKSVFTISASLAISLMLCCTAQA).

The protein belongs to the UPF0412 family.

The protein is UPF0412 protein YaaI of Escherichia coli (strain K12).